Reading from the N-terminus, the 456-residue chain is Exodeoxyribonuclease 7 large subunit (456 aa).

It belongs to the XseA family. In terms of assembly, heterooligomer composed of large and small subunits.

The protein localises to the cytoplasm. It carries out the reaction Exonucleolytic cleavage in either 5'- to 3'- or 3'- to 5'-direction to yield nucleoside 5'-phosphates.. Its function is as follows. Bidirectionally degrades single-stranded DNA into large acid-insoluble oligonucleotides, which are then degraded further into small acid-soluble oligonucleotides. The chain is Exodeoxyribonuclease 7 large subunit from Escherichia coli (strain ATCC 8739 / DSM 1576 / NBRC 3972 / NCIMB 8545 / WDCM 00012 / Crooks).